A 527-amino-acid chain; its full sequence is tRNA-2-methylthio-N(6)-dimethylallyladenosine synthase (527 aa).

The tract at residues 1-27 is disordered; it reads MMNEKQRLQYTAQIETDHPTDKKSALD. The segment covering 15–27 has biased composition (basic and acidic residues); the sequence is ETDHPTDKKSALD. The MTTase N-terminal domain occupies 84–202; sequence RKFYIRTYGC…LPYILKEAYM (119 aa). Residues cysteine 93, cysteine 129, cysteine 163, cysteine 239, cysteine 243, and cysteine 246 each contribute to the [4Fe-4S] cluster site. A Radical SAM core domain is found at 225 to 455; that stretch reads RKGNIKAWVN…NALVNEISAK (231 aa). In terms of domain architecture, TRAM spans 458 to 521; it reads KEYEGQVVEV…TWTLNGEMVE (64 aa).

It belongs to the methylthiotransferase family. MiaB subfamily. In terms of assembly, monomer. [4Fe-4S] cluster is required as a cofactor.

Its subcellular location is the cytoplasm. The enzyme catalyses N(6)-dimethylallyladenosine(37) in tRNA + (sulfur carrier)-SH + AH2 + 2 S-adenosyl-L-methionine = 2-methylsulfanyl-N(6)-dimethylallyladenosine(37) in tRNA + (sulfur carrier)-H + 5'-deoxyadenosine + L-methionine + A + S-adenosyl-L-homocysteine + 2 H(+). In terms of biological role, catalyzes the methylthiolation of N6-(dimethylallyl)adenosine (i(6)A), leading to the formation of 2-methylthio-N6-(dimethylallyl)adenosine (ms(2)i(6)A) at position 37 in tRNAs that read codons beginning with uridine. The chain is tRNA-2-methylthio-N(6)-dimethylallyladenosine synthase from Anoxybacillus flavithermus (strain DSM 21510 / WK1).